The chain runs to 120 residues: NAD(P)H-quinone oxidoreductase subunit 3 (120 aa).

Helical transmembrane passes span 10-32 (LLGF…KVLR), 64-84 (MFAL…PWAV), and 89-109 (LGVL…VGLV).

This sequence belongs to the complex I subunit 3 family. As to quaternary structure, NDH-1 can be composed of about 15 different subunits; different subcomplexes with different compositions have been identified which probably have different functions.

The protein localises to the cellular thylakoid membrane. It catalyses the reaction a plastoquinone + NADH + (n+1) H(+)(in) = a plastoquinol + NAD(+) + n H(+)(out). It carries out the reaction a plastoquinone + NADPH + (n+1) H(+)(in) = a plastoquinol + NADP(+) + n H(+)(out). Its function is as follows. NDH-1 shuttles electrons from an unknown electron donor, via FMN and iron-sulfur (Fe-S) centers, to quinones in the respiratory and/or the photosynthetic chain. The immediate electron acceptor for the enzyme in this species is believed to be plastoquinone. Couples the redox reaction to proton translocation, and thus conserves the redox energy in a proton gradient. Cyanobacterial NDH-1 also plays a role in inorganic carbon-concentration. The sequence is that of NAD(P)H-quinone oxidoreductase subunit 3 from Acaryochloris marina (strain MBIC 11017).